A 403-amino-acid chain; its full sequence is F-box protein At1g60400 (403 aa).

Positions 13-59 (IDRLSALPEHLLCRILSELSTKDSVRTSVLSKHWRNLWLHVPVLELE) constitute an F-box domain.

This Arabidopsis thaliana (Mouse-ear cress) protein is F-box protein At1g60400.